Consider the following 35-residue polypeptide: MWRDSLCTAAGYALGRRDAAALSSLLSEAAAMMEV.

Interacts with lactate dehydrogenases LDHA and LDHB; interaction with mitochondrial LDH leads to inhibition of lactate dehydrogenase activity, preventing conversion of lactate to pyruvate. In terms of tissue distribution, detected in brain, kidney and liver (at protein level).

The protein resides in the mitochondrion. Its function is as follows. Inhibits lactate dehydrogenase (LDH)-mediated conversion of lactate to pyruvate in mitochondria by competing with mitochondrial LDH for binding to NAD(+). Also inhibits cellular lactate utilization. This Mus musculus (Mouse) protein is PTEN upstream open reading frame MP31.